The primary structure comprises 250 residues: Pyrroloquinoline-quinone synthase (250 aa).

It belongs to the PqqC family.

It catalyses the reaction 6-(2-amino-2-carboxyethyl)-7,8-dioxo-1,2,3,4,7,8-hexahydroquinoline-2,4-dicarboxylate + 3 O2 = pyrroloquinoline quinone + 2 H2O2 + 2 H2O + H(+). Its pathway is cofactor biosynthesis; pyrroloquinoline quinone biosynthesis. In terms of biological role, ring cyclization and eight-electron oxidation of 3a-(2-amino-2-carboxyethyl)-4,5-dioxo-4,5,6,7,8,9-hexahydroquinoline-7,9-dicarboxylic-acid to PQQ. The polypeptide is Pyrroloquinoline-quinone synthase (Xanthomonas oryzae pv. oryzae (strain PXO99A)).